The primary structure comprises 257 residues: MTSICSSKFQQQHYQLTNSNIFLLQHQHHHQTQQHQLIAPKIPLGTSQLQNMQQSQQSNVGPMLSSQKKKFNYNNMPYGEQLPSVARRNARERNRVKQVNNGFVNLRQHLPQTVVNSLSNGGRGSSKKLSKVDTLRIAVEYIRGLQDMLDDGTASSTRHIYNSADESSNDGSSYNDYNDSLDSSQQFLTGATQSAQSHSYHSASPTPSYSGSEISGGGYIKQELQEQDLKFDSFDSFSDEQPDDEELLDYISSWQEQ.

One can recognise a bHLH domain in the interval 83–145; that stretch reads PSVARRNARE…RIAVEYIRGL (63 aa). A disordered region spans residues 161-221; it reads YNSADESSND…SEISGGGYIK (61 aa). 2 stretches are compositionally biased toward low complexity: residues 165–184 and 193–213; these read DESS…LDSS and QSAQ…SGSE.

Efficient DNA binding requires dimerization with another bHLH protein. As to expression, l(1)SC, SC and AC strongly label the presumptive stomatogastric nervous system, while ASE is more prominent in the presumptive procephalic lobe.

Its function is as follows. AS-C proteins are involved in the determination of the neuronal precursors in the peripheral nervous system and the central nervous system. The chain is Achaete-scute complex protein T3 (l(1)sc) from Drosophila melanogaster (Fruit fly).